We begin with the raw amino-acid sequence, 459 residues long: Ribosomal protein uS12 methylthiotransferase RimO (459 aa).

Positions 11–126 constitute an MTTase N-terminal domain; it reads PKVGMVSLGC…VMQAVHSHLP (116 aa). 6 residues coordinate [4Fe-4S] cluster: cysteine 20, cysteine 56, cysteine 85, cysteine 157, cysteine 161, and cysteine 164. The region spanning 143–388 is the Radical SAM core domain; that stretch reads LTPRHYAYLK…MEVAEEVSAA (246 aa). One can recognise a TRAM domain in the interval 391–459; that stretch reads ARKVGKTLKV…ADGHDLWGEV (69 aa).

Belongs to the methylthiotransferase family. RimO subfamily. It depends on [4Fe-4S] cluster as a cofactor.

Its subcellular location is the cytoplasm. The enzyme catalyses L-aspartate(89)-[ribosomal protein uS12]-hydrogen + (sulfur carrier)-SH + AH2 + 2 S-adenosyl-L-methionine = 3-methylsulfanyl-L-aspartate(89)-[ribosomal protein uS12]-hydrogen + (sulfur carrier)-H + 5'-deoxyadenosine + L-methionine + A + S-adenosyl-L-homocysteine + 2 H(+). Catalyzes the methylthiolation of an aspartic acid residue of ribosomal protein uS12. This chain is Ribosomal protein uS12 methylthiotransferase RimO, found in Burkholderia pseudomallei (strain K96243).